The primary structure comprises 267 residues: tRNA pseudouridine synthase A (267 aa).

Catalysis depends on Asp51, which acts as the Nucleophile. Residue Tyr109 participates in substrate binding.

It belongs to the tRNA pseudouridine synthase TruA family. As to quaternary structure, homodimer.

It carries out the reaction uridine(38/39/40) in tRNA = pseudouridine(38/39/40) in tRNA. Functionally, formation of pseudouridine at positions 38, 39 and 40 in the anticodon stem and loop of transfer RNAs. The chain is tRNA pseudouridine synthase A from Staphylococcus aureus (strain MSSA476).